The primary structure comprises 261 residues: Acetylglutamate kinase (261 aa).

Residues 41 to 42, Arg-63, and Asn-157 each bind substrate; that span reads GG.

Belongs to the acetylglutamate kinase family. ArgB subfamily.

The protein resides in the cytoplasm. The catalysed reaction is N-acetyl-L-glutamate + ATP = N-acetyl-L-glutamyl 5-phosphate + ADP. It participates in amino-acid biosynthesis; L-arginine biosynthesis; N(2)-acetyl-L-ornithine from L-glutamate: step 2/4. Functionally, catalyzes the ATP-dependent phosphorylation of N-acetyl-L-glutamate. The chain is Acetylglutamate kinase from Koribacter versatilis (strain Ellin345).